Consider the following 310-residue polypeptide: HPr kinase/phosphorylase (310 aa).

Catalysis depends on residues H138 and K159. 153 to 160 (GDSGIGKS) contacts ATP. S160 serves as a coordination point for Mg(2+). D177 (proton acceptor; for phosphorylation activity. Proton donor; for dephosphorylation activity) is an active-site residue. Residues 201–210 (LEIRGVGIID) are important for the catalytic mechanism of both phosphorylation and dephosphorylation. Position 202 (E202) interacts with Mg(2+). The active site involves R243. The important for the catalytic mechanism of dephosphorylation stretch occupies residues 264-269 (PVKTGR).

This sequence belongs to the HPrK/P family. In terms of assembly, homohexamer. Mg(2+) is required as a cofactor.

The enzyme catalyses [HPr protein]-L-serine + ATP = [HPr protein]-O-phospho-L-serine + ADP + H(+). It carries out the reaction [HPr protein]-O-phospho-L-serine + phosphate + H(+) = [HPr protein]-L-serine + diphosphate. Functionally, catalyzes the ATP- as well as the pyrophosphate-dependent phosphorylation of a specific serine residue in HPr, a phosphocarrier protein of the phosphoenolpyruvate-dependent sugar phosphotransferase system (PTS). HprK/P also catalyzes the pyrophosphate-producing, inorganic phosphate-dependent dephosphorylation (phosphorolysis) of seryl-phosphorylated HPr (P-Ser-HPr). The two antagonistic activities of HprK/P are regulated by several intracellular metabolites, which change their concentration in response to the absence or presence of rapidly metabolisable carbon sources (glucose, fructose, etc.) in the growth medium. Therefore, by controlling the phosphorylation state of HPr, HPrK/P is a sensor enzyme that plays a major role in the regulation of carbon metabolism and sugar transport: it mediates carbon catabolite repression (CCR), and regulates PTS-catalyzed carbohydrate uptake and inducer exclusion. This Streptococcus pyogenes serotype M1 protein is HPr kinase/phosphorylase (hprK).